The sequence spans 251 residues: Ribosome maturation factor RimP (251 aa).

Residues 198–251 (NLGLEPPAAPHAKISEKTTKNTKPKKKPAPTNTKKHRLAAERARRGEIEPDEGD) are disordered. A compositionally biased stretch (basic residues) spans 217-234 (KNTKPKKKPAPTNTKKHR). The segment covering 235 to 245 (LAAERARRGEI) has biased composition (basic and acidic residues).

This sequence belongs to the RimP family.

It localises to the cytoplasm. Required for maturation of 30S ribosomal subunits. The polypeptide is Ribosome maturation factor RimP (Bradyrhizobium diazoefficiens (strain JCM 10833 / BCRC 13528 / IAM 13628 / NBRC 14792 / USDA 110)).